Here is a 76-residue protein sequence, read N- to C-terminus: Exodeoxyribonuclease 7 small subunit (76 aa).

It belongs to the XseB family. In terms of assembly, heterooligomer composed of large and small subunits.

The protein resides in the cytoplasm. It catalyses the reaction Exonucleolytic cleavage in either 5'- to 3'- or 3'- to 5'-direction to yield nucleoside 5'-phosphates.. Functionally, bidirectionally degrades single-stranded DNA into large acid-insoluble oligonucleotides, which are then degraded further into small acid-soluble oligonucleotides. This chain is Exodeoxyribonuclease 7 small subunit, found in Geobacter metallireducens (strain ATCC 53774 / DSM 7210 / GS-15).